The chain runs to 165 residues: Small ribosomal subunit protein eS10 (165 aa).

A Phosphotyrosine modification is found at tyrosine 12. A disordered region spans residues 92 to 165 (ATLRRSRPET…FGRGRGQPPQ (74 aa)). Residues 97-128 (SRPETGRPRPKGLEGERPARLTRGEADRDTYR) are compositionally biased toward basic and acidic residues. Residues lysine 138 and lysine 139 each participate in a glycyl lysine isopeptide (Lys-Gly) (interchain with G-Cter in ubiquitin) cross-link. Serine 146 is modified (phosphoserine). Arginine 153 carries the omega-N-methylarginine modification. Gly residues predominate over residues 154 to 165 (GGFGRGRGQPPQ). Symmetric dimethylarginine occurs at positions 158 and 160.

This sequence belongs to the eukaryotic ribosomal protein eS10 family. As to quaternary structure, component of the small ribosomal subunit. The methylated form interacts with NPM1. Methylated by PRMT5. Methylation is necessary for its interaction with NPS1, its localization in the granular component (GC) region of the nucleolus, for the proper assembly of ribosomes, protein synthesis and optimal cell proliferation. Post-translationally, monoubiquitinated by ZNF598 when a ribosome has stalled during translation of poly(A) sequences, leading to preclude synthesis of a long poly-lysine tail and initiate the ribosome quality control (RQC) pathway to degrade the potentially detrimental aberrant nascent polypeptide. Deubiquitinated by OTUD3 and USP21, antagonizing ZNF598 activity. Deubiquitinated by OTUD1, antagonizing ZNF598 activity and stimulating formation of polysomes: deubiquitination by OTUD1 promotes stability and translation of a subset mRNAs with a high abundance of rare codons can limit the translation rate. Deubiquitinated by USP10.

It is found in the cytoplasm. The protein localises to the nucleus. Its subcellular location is the nucleolus. In terms of biological role, component of the 40S ribosomal subunit. The ribosome is a large ribonucleoprotein complex responsible for the synthesis of proteins in the cell. This Oryctolagus cuniculus (Rabbit) protein is Small ribosomal subunit protein eS10 (RPS10).